The following is a 95-amino-acid chain: Co-chaperonin GroES (95 aa).

It belongs to the GroES chaperonin family. As to quaternary structure, heptamer of 7 subunits arranged in a ring. Interacts with the chaperonin GroEL.

It is found in the cytoplasm. Together with the chaperonin GroEL, plays an essential role in assisting protein folding. The GroEL-GroES system forms a nano-cage that allows encapsulation of the non-native substrate proteins and provides a physical environment optimized to promote and accelerate protein folding. GroES binds to the apical surface of the GroEL ring, thereby capping the opening of the GroEL channel. In Maricaulis maris (strain MCS10) (Caulobacter maris), this protein is Co-chaperonin GroES.